The primary structure comprises 110 residues: Urease subunit beta (110 aa).

This sequence belongs to the urease beta subunit family. Heterotrimer of UreA (gamma), UreB (beta) and UreC (alpha) subunits. Three heterotrimers associate to form the active enzyme.

It localises to the cytoplasm. It carries out the reaction urea + 2 H2O + H(+) = hydrogencarbonate + 2 NH4(+). Its pathway is nitrogen metabolism; urea degradation; CO(2) and NH(3) from urea (urease route): step 1/1. In Pseudoalteromonas translucida (strain TAC 125), this protein is Urease subunit beta.